Consider the following 60-residue polypeptide: uncharacterized protein (60 aa).

Residues 38–58 (SILAGGIIPVLFFFPLFLFLY) form a helical membrane-spanning segment.

The protein localises to the membrane. This is an uncharacterized protein from Saccharomyces cerevisiae (strain ATCC 204508 / S288c) (Baker's yeast).